Reading from the N-terminus, the 202-residue chain is Peptidyl-tRNA hydrolase (202 aa).

TRNA is bound at residue Tyr-14. The Proton acceptor role is filled by His-19. TRNA contacts are provided by Tyr-64, Asn-66, and Asn-112.

The protein belongs to the PTH family. Monomer.

The protein localises to the cytoplasm. It carries out the reaction an N-acyl-L-alpha-aminoacyl-tRNA + H2O = an N-acyl-L-amino acid + a tRNA + H(+). Functionally, hydrolyzes ribosome-free peptidyl-tRNAs (with 1 or more amino acids incorporated), which drop off the ribosome during protein synthesis, or as a result of ribosome stalling. Catalyzes the release of premature peptidyl moieties from peptidyl-tRNA molecules trapped in stalled 50S ribosomal subunits, and thus maintains levels of free tRNAs and 50S ribosomes. The polypeptide is Peptidyl-tRNA hydrolase (Nitrobacter winogradskyi (strain ATCC 25391 / DSM 10237 / CIP 104748 / NCIMB 11846 / Nb-255)).